A 757-amino-acid chain; its full sequence is uncharacterized protein (757 aa).

The S1 motif domain occupies 640 to 709 (GMILEGVVSN…ARKRIALTMR (70 aa)). Positions 711-741 (DDEPGGAKHKMPSENRSRERTAGRKPQRNDR) are enriched in basic and acidic residues. The tract at residues 711–757 (DDEPGGAKHKMPSENRSRERTAGRKPQRNDRAPANSAMADAFAKLKR) is disordered.

This is an uncharacterized protein from Neisseria meningitidis serogroup B (strain ATCC BAA-335 / MC58).